Here is a 362-residue protein sequence, read N- to C-terminus: sn-glycerol-3-phosphate import ATP-binding protein UgpC (362 aa).

The ABC transporter domain maps to 4–235; that stretch reads LSFRNVKKTY…PASTFVAGFI (232 aa). 37–44 provides a ligand contact to ATP; sequence GPSGCGKS.

Belongs to the ABC transporter superfamily. sn-glycerol-3-phosphate importer (TC 3.A.1.1.3) family. In terms of assembly, the complex is composed of two ATP-binding proteins (UgpC), two transmembrane proteins (UgpA and UgpE) and a solute-binding protein (UgpB).

The protein resides in the cell inner membrane. It carries out the reaction sn-glycerol 3-phosphate(out) + ATP + H2O = sn-glycerol 3-phosphate(in) + ADP + phosphate + H(+). Its function is as follows. Part of the ABC transporter complex UgpBAEC involved in sn-glycerol-3-phosphate (G3P) import. Responsible for energy coupling to the transport system. This chain is sn-glycerol-3-phosphate import ATP-binding protein UgpC, found in Bordetella parapertussis (strain 12822 / ATCC BAA-587 / NCTC 13253).